We begin with the raw amino-acid sequence, 564 residues long: Serine/threonine-protein kinase PknA (564 aa).

The 263-residue stretch at 9–271 folds into the Protein kinase domain; the sequence is YRVIKTLGSG…TAREMLEALQ (263 aa). ATP contacts are provided by residues 15 to 23 and lysine 40; that span reads LGSGGFGET. Aspartate 139 (proton acceptor) is an active-site residue. Residues 360-406 are compositionally biased toward polar residues; it reads QPVTQTTSLPSETTISNNDTPTVEPSPTDTPETPISQTVTQDPTPQA. The tract at residues 360-458 is disordered; that stretch reads QPVTQTTSLP…PVEATDRPSP (99 aa). Over residues 428–445 the composition is skewed to low complexity; sequence TTEPTTSVPQPTTPSEPQ.

The protein belongs to the protein kinase superfamily. Ser/Thr protein kinase family.

It catalyses the reaction L-seryl-[protein] + ATP = O-phospho-L-seryl-[protein] + ADP + H(+). The catalysed reaction is L-threonyl-[protein] + ATP = O-phospho-L-threonyl-[protein] + ADP + H(+). Probably required for both normal cellular growth and differentiation. Inactivation of pknA leads to colonies that appear light green and rough in the absence of combined nitrogen. The sequence is that of Serine/threonine-protein kinase PknA (pknA) from Nostoc sp. (strain PCC 7120 / SAG 25.82 / UTEX 2576).